Consider the following 566-residue polypeptide: Glutamate--tRNA ligase (566 aa).

The 'HIGH' region signature appears at 93–103 (PNPDYTIHLGN).

Belongs to the class-I aminoacyl-tRNA synthetase family. Glutamate--tRNA ligase type 2 subfamily.

It localises to the cytoplasm. The enzyme catalyses tRNA(Glu) + L-glutamate + ATP = L-glutamyl-tRNA(Glu) + AMP + diphosphate. Its function is as follows. Catalyzes the attachment of glutamate to tRNA(Glu) in a two-step reaction: glutamate is first activated by ATP to form Glu-AMP and then transferred to the acceptor end of tRNA(Glu). This is Glutamate--tRNA ligase from Staphylothermus marinus (strain ATCC 43588 / DSM 3639 / JCM 9404 / F1).